We begin with the raw amino-acid sequence, 471 residues long: UDP-N-acetylmuramate--L-alanine ligase (471 aa).

114 to 120 (GTHGKTT) is a binding site for ATP.

This sequence belongs to the MurCDEF family.

The protein localises to the cytoplasm. The enzyme catalyses UDP-N-acetyl-alpha-D-muramate + L-alanine + ATP = UDP-N-acetyl-alpha-D-muramoyl-L-alanine + ADP + phosphate + H(+). Its pathway is cell wall biogenesis; peptidoglycan biosynthesis. Cell wall formation. The sequence is that of UDP-N-acetylmuramate--L-alanine ligase from Allorhizobium ampelinum (strain ATCC BAA-846 / DSM 112012 / S4) (Agrobacterium vitis (strain S4)).